Consider the following 106-residue polypeptide: COX assembly mitochondrial protein homolog (106 aa).

Position 2 is an N-acetylalanine (A2). The CHCH domain occupies 28–71; sequence RERCSEQVEDFTRCCKDSGILMVLKCRKENSALKDCLTAYYNDP. 2 short sequence motifs (cx9C motif) span residues 31–41 and 53–63; these read CSEQVEDFTRC and CRKENSALKDC. 2 disulfides stabilise this stretch: C31/C63 and C41/C53.

The protein belongs to the CMC family. In terms of assembly, component of the MITRAC (mitochondrial translation regulation assembly intermediate of cytochrome c oxidase complex) complex, the core components of this complex being COA3/MITRAC12 and COX14.

It localises to the mitochondrion. Its function is as follows. Component of the MITRAC (mitochondrial translation regulation assembly intermediate of cytochrome c oxidase complex) complex, that regulates cytochrome c oxidase assembly. The protein is COX assembly mitochondrial protein homolog (Cmc1) of Mus musculus (Mouse).